A 186-amino-acid polypeptide reads, in one-letter code: Elongation factor P (186 aa).

Belongs to the elongation factor P family.

Its subcellular location is the cytoplasm. The protein operates within protein biosynthesis; polypeptide chain elongation. In terms of biological role, involved in peptide bond synthesis. Stimulates efficient translation and peptide-bond synthesis on native or reconstituted 70S ribosomes in vitro. Probably functions indirectly by altering the affinity of the ribosome for aminoacyl-tRNA, thus increasing their reactivity as acceptors for peptidyl transferase. This Neisseria meningitidis serogroup A / serotype 4A (strain DSM 15465 / Z2491) protein is Elongation factor P.